The sequence spans 435 residues: 5-methylthioadenosine/S-adenosylhomocysteine deaminase (435 aa).

Residues H65 and H67 each contribute to the Zn(2+) site. E94, R150, and H189 together coordinate substrate. H216 contacts Zn(2+). Substrate is bound by residues E219 and D304. D304 contributes to the Zn(2+) binding site.

This sequence belongs to the metallo-dependent hydrolases superfamily. MTA/SAH deaminase family. Requires Zn(2+) as cofactor.

The catalysed reaction is S-adenosyl-L-homocysteine + H2O + H(+) = S-inosyl-L-homocysteine + NH4(+). It carries out the reaction S-methyl-5'-thioadenosine + H2O + H(+) = S-methyl-5'-thioinosine + NH4(+). Catalyzes the deamination of 5-methylthioadenosine and S-adenosyl-L-homocysteine into 5-methylthioinosine and S-inosyl-L-homocysteine, respectively. Is also able to deaminate adenosine. The chain is 5-methylthioadenosine/S-adenosylhomocysteine deaminase from Bacillus cereus (strain 03BB102).